The chain runs to 56 residues: Large ribosomal subunit protein bL32 (56 aa).

The span at 1–16 (MAVQKSKKSRSMRGMR) shows a compositional bias: basic residues. A disordered region spans residues 1–21 (MAVQKSKKSRSMRGMRRSHDA).

Belongs to the bacterial ribosomal protein bL32 family.

The protein is Large ribosomal subunit protein bL32 of Vibrio atlanticus (strain LGP32) (Vibrio splendidus (strain Mel32)).